A 203-amino-acid chain; its full sequence is MREAMQLVPMVIEQSSRGERSFDIYSRLLRERIIFLNGEVNDTVSALVCAQLLFLEAENSKKPINLYINSPGGVVTSGLAMYDTMRFIRAPVHTLCMGTARSMGSFLLMAGEAGGRAALPNASILIHQPSGGFQGQASDMMIHAEEILKTKQRMTRLYAEHCGRSYEDFERGMDRDRFMTAEEALEWGLIDRILTVREGEIPD.

The Nucleophile role is filled by Ser-102. His-127 is an active-site residue.

This sequence belongs to the peptidase S14 family. In terms of assembly, fourteen ClpP subunits assemble into 2 heptameric rings which stack back to back to give a disk-like structure with a central cavity, resembling the structure of eukaryotic proteasomes.

It localises to the cytoplasm. The catalysed reaction is Hydrolysis of proteins to small peptides in the presence of ATP and magnesium. alpha-casein is the usual test substrate. In the absence of ATP, only oligopeptides shorter than five residues are hydrolyzed (such as succinyl-Leu-Tyr-|-NHMec, and Leu-Tyr-Leu-|-Tyr-Trp, in which cleavage of the -Tyr-|-Leu- and -Tyr-|-Trp bonds also occurs).. Functionally, cleaves peptides in various proteins in a process that requires ATP hydrolysis. Has a chymotrypsin-like activity. Plays a major role in the degradation of misfolded proteins. The sequence is that of ATP-dependent Clp protease proteolytic subunit 1 from Rhizobium johnstonii (strain DSM 114642 / LMG 32736 / 3841) (Rhizobium leguminosarum bv. viciae).